A 420-amino-acid polypeptide reads, in one-letter code: Glucose-1-phosphate adenylyltransferase (420 aa).

Alpha-D-glucose 1-phosphate contacts are provided by residues Tyr-107, Gly-172, 187–188 (EK), and Ser-205.

This sequence belongs to the bacterial/plant glucose-1-phosphate adenylyltransferase family. As to quaternary structure, homotetramer.

It catalyses the reaction alpha-D-glucose 1-phosphate + ATP + H(+) = ADP-alpha-D-glucose + diphosphate. Its pathway is glycan biosynthesis; glycogen biosynthesis. In terms of biological role, involved in the biosynthesis of ADP-glucose, a building block required for the elongation reactions to produce glycogen. Catalyzes the reaction between ATP and alpha-D-glucose 1-phosphate (G1P) to produce pyrophosphate and ADP-Glc. The protein is Glucose-1-phosphate adenylyltransferase of Rhizobium johnstonii (strain DSM 114642 / LMG 32736 / 3841) (Rhizobium leguminosarum bv. viciae).